A 117-amino-acid chain; its full sequence is Hemerythrin subunit alpha (117 aa).

Positions 24, 53, 57, 72, 76, 105, and 110 each coordinate Fe cation.

The protein belongs to the hemerythrin family. In terms of assembly, octamer composed of two types of chains: alpha and beta.

Hemerythrin is a respiratory protein in blood cells of certain marine worms. The oxygen-binding site in each chain contains two iron atoms. The chain is Hemerythrin subunit alpha from Lingula reevii (Inarticulated brachiopod).